The sequence spans 221 residues: Mitochondrial cardiolipin hydrolase (221 aa).

Topologically, residues 1–4 are mitochondrial intermembrane; that stretch reads MGRS. Positions 1–38 are required for mitochondrial localization; the sequence is MGRSSWRLVFAAGAGLALALEALPWLMRWLLAGRRPRR. The chain crosses the membrane as a helical span at residues 5–27; that stretch reads SWRLVFAAGAGLALALEALPWLM. The Cytoplasmic portion of the chain corresponds to 28 to 221; it reads RWLLAGRRPR…SFFPQKHRGH (194 aa). A C3H1-type; atypical zinc finger spans residues 44–75; that stretch reads PSQVTCTEALLQAPGLPPGPSGCPCSLPHSES. A PLD phosphodiesterase domain is found at 148-175; the sequence is DLGYMHHKFAIVDKKVLITGSLNWTTQA. Catalysis depends on residues His153, Lys155, and Asp160.

Belongs to the phospholipase D family. MitoPLD/Zucchini subfamily. In terms of assembly, homodimer. Interacts with MOV10L1. Interacts with MIGA1 and MIGA2; possibly facilitating homodimer formation. Interacts with GK2. Predominantly expressed in testis (at protein level) and in growing ovary. Also expressed in the brain, eye and urinary bladder (at protein level), but its levels were low or undetectable in other organs.

It localises to the mitochondrion outer membrane. It is found in the nucleus membrane. The protein resides in the cell membrane. Its subcellular location is the golgi apparatus. The enzyme catalyses a cardiolipin + H2O = a 1,2-diacyl-sn-glycero-3-phospho-(1'-sn-glycerol) + a 1,2-diacyl-sn-glycero-3-phosphate + H(+). With respect to regulation, single stranded DNA (ssDNA) hydrolase activity does not depend upon, but is stimulated by the presence of Ca(2+) and Mn(2+). MIGA1 and MIGA2 increase PLD6 self-association affinity and affects the homodimer conformation facilitating its phospholipase activity over the nuclease activity. MYC induces its expression and stimulates its phospholipase activity. Its function is as follows. Presents phospholipase and nuclease activities, depending on the different physiological conditions. Interaction with Mitoguardin (MIGA1 or MIGA2) affects the dimer conformation, facilitating the lipase activity over the nuclease activity. Plays a key role in mitochondrial fusion and fission via its phospholipase activity. In its phospholipase role, it uses the mitochondrial lipid cardiolipin as substrate to generate phosphatidate (PA or 1,2-diacyl-sn-glycero-3-phosphate), a second messenger signaling lipid. Production of PA facilitates Mitofusin-mediated fusion, whereas the cleavage of PA by the Lipin family of phosphatases produces diacylgycerol (DAG) which promotes mitochondrial fission. Both Lipin and DAG regulate mitochondrial dynamics and membrane fusion/fission, important processes for adapting mitochondrial metabolism to changes in cell physiology. Mitochondrial fusion enables cells to cope with the increased nucleotide demand during DNA synthesis. Mitochondrial function and dynamics are closely associated with biological processes such as cell growth, proliferation, and differentiation. Mediator of MYC activity, promotes mitochondrial fusion and activates AMPK which in turn inhibits YAP/TAZ, thereby inducing cell growth and proliferation. The endonuclease activity plays a critical role in PIWI-interacting RNA (piRNA) biogenesis during spermatogenesis. Implicated in spermatogenesis and sperm fertility in testicular germ cells, its single strand-specific nuclease activity is critical for the biogenesis/maturation of PIWI-interacting RNA (piRNA). MOV10L1 selectively binds to piRNA precursors and funnels them to the endonuclease that catalyzes the first cleavage step of piRNA processing to generate piRNA intermediate fragments that are subsequently loaded to Piwi proteins. Cleaves either DNA or RNA substrates with similar affinity, producing a 5' phosphate end, in this way it participates in the processing of primary piRNA transcripts. piRNAs provide essential protection against the activity of mobile genetic elements. piRNA-mediated transposon silencing is thus critical for maintaining genome stability, in particular in germline cells when transposons are mobilized as a consequence of wide-spread genomic demethylation. PA may act as signaling molecule in the recognition/transport of the precursor RNAs of primary piRNAs. Interacts with tesmin in testes, suggesting a role in spermatogenesis via association with its interacting partner. In Mus musculus (Mouse), this protein is Mitochondrial cardiolipin hydrolase (Pld6).